We begin with the raw amino-acid sequence, 384 residues long: A-type ATP synthase subunit C (384 aa).

It belongs to the V-ATPase V0D/AC39 subunit family. As to quaternary structure, has multiple subunits with at least A(3), B(3), C, D, E, F, H, I and proteolipid K(x).

Its subcellular location is the cell membrane. Functionally, component of the A-type ATP synthase that produces ATP from ADP in the presence of a proton gradient across the membrane. The protein is A-type ATP synthase subunit C of Methanobrevibacter smithii (strain ATCC 35061 / DSM 861 / OCM 144 / PS).